The following is a 211-amino-acid chain: LexA repressor (211 aa).

Positions 30–50 form a DNA-binding region, H-T-H motif; that stretch reads RVEIAREIGFKSPNAAEEHLK. Active-site for autocatalytic cleavage activity residues include S128 and K165.

Belongs to the peptidase S24 family. Homodimer.

The enzyme catalyses Hydrolysis of Ala-|-Gly bond in repressor LexA.. Its function is as follows. Represses a number of genes involved in the response to DNA damage (SOS response), including recA and lexA. In the presence of single-stranded DNA, RecA interacts with LexA causing an autocatalytic cleavage which disrupts the DNA-binding part of LexA, leading to derepression of the SOS regulon and eventually DNA repair. The polypeptide is LexA repressor (Haemophilus ducreyi (strain 35000HP / ATCC 700724)).